The following is a 105-amino-acid chain: Large ribosomal subunit protein uL24 (105 aa).

The protein belongs to the universal ribosomal protein uL24 family. In terms of assembly, part of the 50S ribosomal subunit.

In terms of biological role, one of two assembly initiator proteins, it binds directly to the 5'-end of the 23S rRNA, where it nucleates assembly of the 50S subunit. Functionally, one of the proteins that surrounds the polypeptide exit tunnel on the outside of the subunit. The protein is Large ribosomal subunit protein uL24 of Xanthomonas campestris pv. campestris (strain 8004).